The primary structure comprises 395 residues: Acetylornithine aminotransferase (395 aa).

Pyridoxal 5'-phosphate is bound by residues G117 to A118 and F144. N(2)-acetyl-L-ornithine is bound at residue R147. Residue D230–Q233 coordinates pyridoxal 5'-phosphate. Residue K259 is modified to N6-(pyridoxal phosphate)lysine. S285 provides a ligand contact to N(2)-acetyl-L-ornithine. Residue T286 coordinates pyridoxal 5'-phosphate.

Belongs to the class-III pyridoxal-phosphate-dependent aminotransferase family. ArgD subfamily. Homodimer. Requires pyridoxal 5'-phosphate as cofactor.

The protein localises to the cytoplasm. The catalysed reaction is N(2)-acetyl-L-ornithine + 2-oxoglutarate = N-acetyl-L-glutamate 5-semialdehyde + L-glutamate. The protein operates within amino-acid biosynthesis; L-arginine biosynthesis; N(2)-acetyl-L-ornithine from L-glutamate: step 4/4. This chain is Acetylornithine aminotransferase, found in Methanosarcina acetivorans (strain ATCC 35395 / DSM 2834 / JCM 12185 / C2A).